The chain runs to 787 residues: Phenylalanine--tRNA ligase beta subunit (787 aa).

Residues 38-151 (GQDPAPFVVA…SDYEVGDSFF (114 aa)) form the tRNA-binding domain. Positions 397–474 (SEGRVISFNP…RMHGYDKVQE (78 aa)) constitute a B5 domain. Mg(2+)-binding residues include Asp452, Asp458, Glu461, and Glu462. In terms of domain architecture, FDX-ACB spans 694 to 785 (HKYQPVKRDF…VAQKLGGELR (92 aa)).

It belongs to the phenylalanyl-tRNA synthetase beta subunit family. Type 1 subfamily. As to quaternary structure, tetramer of two alpha and two beta subunits. Mg(2+) serves as cofactor.

The protein resides in the cytoplasm. The catalysed reaction is tRNA(Phe) + L-phenylalanine + ATP = L-phenylalanyl-tRNA(Phe) + AMP + diphosphate + H(+). The polypeptide is Phenylalanine--tRNA ligase beta subunit (Anaplasma marginale (strain St. Maries)).